The following is a 318-amino-acid chain: Taste receptor type 2 member 14 (318 aa).

At 1 to 7 the chain is on the extracellular side; that stretch reads MGGVIKN. Residues 8 to 28 form a helical membrane-spanning segment; sequence ISTFVLIVEFIIGNLGNSFIA. Residues 29–55 lie on the Cytoplasmic side of the membrane; the sequence is LVNCIDWVKRRKISLVDQLLTALAISR. A helical transmembrane segment spans residues 56 to 76; sequence ISLVWLIFGSWCVSAFFPALF. The Extracellular segment spans residues 77 to 87; the sequence is ATEKMFRMLTN. Residues T86 and W89 each coordinate cholesterol. Residues 88 to 108 form a helical membrane-spanning segment; the sequence is IWAVTNHFSVWLATGLGTFYF. At 109–129 the chain is on the cytoplasmic side; sequence LKIANFSNSIFIYLKWRVKKV. The helical transmembrane segment at 130–150 threads the bilayer; the sequence is VLVLLLVTSVFLFLNIALINI. Over 151-184 the chain is Extracellular; it reads HINASINGYGGNKTCSSDSNDFTRFSSLIALTSS. N153 and N162 each carry an N-linked (GlcNAc...) asparagine glycan. A180 provides a ligand contact to cholesterol. A helical membrane pass occupies residues 185–205; that stretch reads VFIFIPFILSLAIFLLLTFSL. Over 206-232 the chain is Cytoplasmic; the sequence is WKHCKKMQHTVKASGDASTKAHRGVMQ. Residues 233-253 form a helical membrane-spanning segment; sequence TVIAFLLLYPIFSLSFFIAVW. Topologically, residues 254-261 are extracellular; that stretch reads TSGWLEEN. A helical transmembrane segment spans residues 262 to 282; it reads LIILSQVMGMAYPSCHSCILI. Residues L265 and V268 each contribute to the cholesterol site. Residues 283–317 lie on the Cytoplasmic side of the membrane; sequence LGNKKLRQASLSVLWWLKYRFKDGEPSGHKGFRES.

The protein belongs to the G-protein coupled receptor T2R family. Core component of the TAS2R14-GNAI1 complex, consisting of TAS2R14, GNAI1, GNB1 and GNG2; within the complex interacts with GNAI1. Core component of the TAS2R14-GNAT3 complex, consisting of TAS2R14, GNAT3, GNB1 and GNG2; within the complex interacts with GNAT3. Core component of the TAS2R14-GNAS2 complex, consisting of TAS2R14, GNAS2, GNB1 and GNG2; within the complex interacts with GNAS2.

It is found in the membrane. It catalyses the reaction Ca(2+)(in) = Ca(2+)(out). It carries out the reaction 3',5'-cyclic AMP(in) = 3',5'-cyclic AMP(out). Basal activity is enhanced by binding to bitter tastants, such as flufenamic acid and aristolochic acid. Regulated by cholesterol in a concentration-dependent manner. Gustducin-linked G-protein coupled receptor that plays a role in the perception of bitterness. The activity of this receptor stimulates GNAT3, activating the gustducin G-protein pathway. Likely plays a role in sensing the chemical composition of the gastrointestinal content and other extra-oral tissues via the inhibitory G-protein pathways. In Pongo pygmaeus (Bornean orangutan), this protein is Taste receptor type 2 member 14 (TAS2R14).